The primary structure comprises 63 residues: Arabinogalactan protein 22 (63 aa).

The signal sequence occupies residues 1 to 27; that stretch reads MASLKFPLEILAVFVIISVILLPIAQS. Residues proline 32, proline 34, and proline 36 each carry the 4-hydroxyproline modification. Proline 32, proline 34, and proline 36 each carry an O-linked (Ara...) hydroxyproline glycan. Serine 38 carries the GPI-anchor amidated serine lipid modification. Positions 39-63 are cleaved as a propeptide — removed in mature form; the sequence is DGTSIDQGIAYVLMMVALALTYFIH.

The protein belongs to the AG-peptide AGP family. Post-translationally, contains 4-hydroxyproline; hydroxylated on Pro-32, Pro-34 and Pro-36. O-glycosylated on hydroxyprolines; noncontiguous hydroxylproline residues are glycosylated with arabinogalactan.

Its subcellular location is the cell membrane. Its function is as follows. Proteoglycan that seems to be implicated in diverse developmental roles such as differentiation, cell-cell recognition, embryogenesis and programmed cell death. This Arabidopsis thaliana (Mouse-ear cress) protein is Arabinogalactan protein 22.